A 38-amino-acid chain; its full sequence is Photosystem II reaction center protein L (38 aa).

A helical membrane pass occupies residues 17–37; that stretch reads SLYWGLLLIFVLAILFSNYFF.

Belongs to the PsbL family. In terms of assembly, PSII is composed of 1 copy each of membrane proteins PsbA, PsbB, PsbC, PsbD, PsbE, PsbF, PsbH, PsbI, PsbJ, PsbK, PsbL, PsbM, PsbT, PsbX, PsbY, PsbZ, Psb30/Ycf12, at least 3 peripheral proteins of the oxygen-evolving complex and a large number of cofactors. It forms dimeric complexes.

The protein resides in the plastid. The protein localises to the chloroplast thylakoid membrane. Functionally, one of the components of the core complex of photosystem II (PSII). PSII is a light-driven water:plastoquinone oxidoreductase that uses light energy to abstract electrons from H(2)O, generating O(2) and a proton gradient subsequently used for ATP formation. It consists of a core antenna complex that captures photons, and an electron transfer chain that converts photonic excitation into a charge separation. This subunit is found at the monomer-monomer interface and is required for correct PSII assembly and/or dimerization. The sequence is that of Photosystem II reaction center protein L from Aethionema cordifolium (Lebanon stonecress).